We begin with the raw amino-acid sequence, 279 residues long: Acetyl-coenzyme A carboxylase carboxyl transferase subunit beta (279 aa).

Residues 23-279 form the CoA carboxyltransferase N-terminal domain; the sequence is MWWKCDECGA…IVRLMTMLAP (257 aa). Residues Cys27, Cys30, Cys46, and Cys49 each coordinate Zn(2+). The C4-type zinc-finger motif lies at 27-49; that stretch reads CDECGAMLHKKQLEDNFYTCSEC.

This sequence belongs to the AccD/PCCB family. As to quaternary structure, acetyl-CoA carboxylase is a heterohexamer composed of biotin carboxyl carrier protein (AccB), biotin carboxylase (AccC) and two subunits each of ACCase subunit alpha (AccA) and ACCase subunit beta (AccD). Zn(2+) serves as cofactor.

The protein resides in the cytoplasm. The catalysed reaction is N(6)-carboxybiotinyl-L-lysyl-[protein] + acetyl-CoA = N(6)-biotinyl-L-lysyl-[protein] + malonyl-CoA. It participates in lipid metabolism; malonyl-CoA biosynthesis; malonyl-CoA from acetyl-CoA: step 1/1. Functionally, component of the acetyl coenzyme A carboxylase (ACC) complex. Biotin carboxylase (BC) catalyzes the carboxylation of biotin on its carrier protein (BCCP) and then the CO(2) group is transferred by the transcarboxylase to acetyl-CoA to form malonyl-CoA. In Chlorobium phaeobacteroides (strain DSM 266 / SMG 266 / 2430), this protein is Acetyl-coenzyme A carboxylase carboxyl transferase subunit beta.